The primary structure comprises 1078 residues: Carbamoyl phosphate synthase large chain (1078 aa).

Positions Met1–Glu401 are carboxyphosphate synthetic domain. Residues Arg129, Arg169, Gly175, Gly176, Arg208, Leu210, Glu215, Gly241, Val242, His243, Gln284, and Glu298 each coordinate ATP. One can recognise an ATP-grasp 1 domain in the interval Lys133–Ile327. Mg(2+) contacts are provided by Gln284, Glu298, and Asn300. Residues Gln284, Glu298, and Asn300 each contribute to the Mn(2+) site. The interval Thr402–Ala546 is oligomerization domain. The interval Pro547–Gly935 is carbamoyl phosphate synthetic domain. Residues Glu677 to Leu867 enclose the ATP-grasp 2 domain. 10 residues coordinate ATP: Arg713, Lys752, Leu754, Glu758, Gly783, Val784, His785, Ser786, Gln826, and Glu838. The Mg(2+) site is built by Gln826, Glu838, and Asn840. Residues Gln826, Glu838, and Asn840 each coordinate Mn(2+). The MGS-like domain occupies Leu936–Ala1078. The allosteric domain stretch occupies residues Leu936–Ala1078.

Belongs to the CarB family. In terms of assembly, composed of two chains; the small (or glutamine) chain promotes the hydrolysis of glutamine to ammonia, which is used by the large (or ammonia) chain to synthesize carbamoyl phosphate. Tetramer of heterodimers (alpha,beta)4. The cofactor is Mg(2+). Mn(2+) is required as a cofactor.

It catalyses the reaction hydrogencarbonate + L-glutamine + 2 ATP + H2O = carbamoyl phosphate + L-glutamate + 2 ADP + phosphate + 2 H(+). It carries out the reaction hydrogencarbonate + NH4(+) + 2 ATP = carbamoyl phosphate + 2 ADP + phosphate + 2 H(+). It functions in the pathway amino-acid biosynthesis; L-arginine biosynthesis; carbamoyl phosphate from bicarbonate: step 1/1. Its pathway is pyrimidine metabolism; UMP biosynthesis via de novo pathway; (S)-dihydroorotate from bicarbonate: step 1/3. Its function is as follows. Large subunit of the glutamine-dependent carbamoyl phosphate synthetase (CPSase). CPSase catalyzes the formation of carbamoyl phosphate from the ammonia moiety of glutamine, carbonate, and phosphate donated by ATP, constituting the first step of 2 biosynthetic pathways, one leading to arginine and/or urea and the other to pyrimidine nucleotides. The large subunit (synthetase) binds the substrates ammonia (free or transferred from glutamine from the small subunit), hydrogencarbonate and ATP and carries out an ATP-coupled ligase reaction, activating hydrogencarbonate by forming carboxy phosphate which reacts with ammonia to form carbamoyl phosphate. This chain is Carbamoyl phosphate synthase large chain, found in Thermomicrobium roseum (strain ATCC 27502 / DSM 5159 / P-2).